Consider the following 167-residue polypeptide: UPF0114 protein in repA1-repA2 intergenic region (167 aa).

The next 3 helical transmembrane spans lie at 15–35 (LMFP…LKFF), 53–73 (LVLV…LVMV), and 136–156 (IMLC…MAYI).

Belongs to the UPF0114 family.

The protein resides in the cell membrane. The polypeptide is UPF0114 protein in repA1-repA2 intergenic region (Buchnera aphidicola subsp. Diuraphis noxia).